Consider the following 593-residue polypeptide: Bifunctional lycopene cyclase/phytoene synthase (593 aa).

The segment at 1 to 242 (MAYDYALVHL…IVFGMAVFDQ (242 aa)) is lycopene beta-cyclase. Transmembrane regions (helical) follow at residues 8–28 (VHLKYTIPLAALLTVIAYPIF), 31–51 (IHFLQIGSLIVVSFLATLPWD), 77–97 (IEELFFFVIQTYITSLFYILL), 117–136 (IARGKVIGQGILVALTLYGV), 147–167 (YLGLILAWAFPFALLTFTVAG), 169–189 (FILTLPLTSTVVPIIIPTVYL), and 231–251 (ILIVFGMAVFDQYLAIIFAFP). Residues 249–593 (AFPHLFPKVP…KTVLKALFSA (345 aa)) are phytoene synthase.

In the N-terminal section; belongs to the lycopene beta-cyclase family. It in the C-terminal section; belongs to the phytoene/squalene synthase family.

Its subcellular location is the membrane. It catalyses the reaction all-trans-lycopene = gamma-carotene. It carries out the reaction gamma-carotene = all-trans-beta-carotene. The catalysed reaction is 2 (2E,6E,10E)-geranylgeranyl diphosphate = 15-cis-phytoene + 2 diphosphate. It functions in the pathway carotenoid biosynthesis; beta-carotene biosynthesis. It participates in carotenoid biosynthesis; phytoene biosynthesis; all-trans-phytoene from geranylgeranyl diphosphate: step 1/1. Its function is as follows. Bifunctional enzyme that catalyzes the reactions from geranylgeranyl diphosphate to phytoene (phytoene synthase) and lycopene to beta-carotene via the intermediate gamma-carotene (lycopene cyclase). The polypeptide is Bifunctional lycopene cyclase/phytoene synthase (Podospora anserina (strain S / ATCC MYA-4624 / DSM 980 / FGSC 10383) (Pleurage anserina)).